The following is a 274-amino-acid chain: Long chain fatty acid elongase 2 (274 aa).

7 helical membrane passes run 29 to 49 (MSTF…TIYF), 73 to 93 (FSLF…GVFM), 115 to 135 (FWGW…MFLV), 140 to 160 (PVIF…VVTY), 170 to 190 (SLAL…VRAL), 201 to 221 (FITT…GHLV), and 238 to 258 (VLSI…KFFY).

This sequence belongs to the ELO family. As to expression, expressed in various tissues and parts of the body, including the ventral cord, pharyngeal muscles, uterus, and the tail, and most strongly in intestinal cells.

It is found in the membrane. It carries out the reaction hexadecanoyl-CoA + malonyl-CoA + H(+) = 3-oxooctadecanoyl-CoA + CO2 + CoA. It participates in lipid metabolism; fatty acid biosynthesis. Functionally, catalyzes the first and rate-limiting reaction of the four reactions that constitute the long-chain fatty acids elongation cycle. Uses malonyl-CoA to add 2 carbons per cycle to the chain of long-chain fatty acids. Condensing enzyme responsible for the elongation of palmitate (hexadecanoate, 16:0), also involved in polyunsaturated fatty acid (PUFA) biosynthesis. This Caenorhabditis elegans protein is Long chain fatty acid elongase 2.